The primary structure comprises 443 residues: Protein SCAR (443 aa).

The tract at residues 1–96 (MVLITRYLPS…DYHRNTSIDT (96 aa)) is interaction with brk1 and abiA. A coiled-coil region spans residues 166–201 (VAEQQKLHEEARQRKRERREARLKKKGEKNEVEVKK). 2 disordered regions span residues 176-197 (ARQR…KNEV) and 220-386 (INIE…RSDL). Basic residues predominate over residues 178–192 (QRKRERREARLKKKG). Residues 221–252 (NIESPHTSSPQIQHQSNNTATPQHTTQHFGTN) show a composition bias toward polar residues. Low complexity-rich tracts occupy residues 263-277 (SQSS…INSY) and 285-305 (NTST…TGFN). Positions 306-323 (TPPPPMSNNNNMPPPPPM) are enriched in pro residues. The segment covering 324 to 338 (QQNGGAANNRLSVHN) has biased composition (polar residues). Positions 346 to 365 (PAPPPPPPPPSAPAPPPPPM) are enriched in pro residues. The WH2 domain occupies 382 to 399 (ARSDLLSSIMQGMALKPA).

This sequence belongs to the SCAR/WAVE family. Part of a Scar/WAVE complex containing brk1, scrA, abiA, pirA and napA. Interacts with brk1 and abiA.

The protein localises to the cytoplasm. Its subcellular location is the cytoskeleton. It is found in the cell projection. It localises to the pseudopodium tip. The protein resides in the filopodium tip. Its function is as follows. Involved in regulation of actin and microtubule organization. Regulates phagocytosis and macropinocytosis. This is Protein SCAR (scrA) from Dictyostelium discoideum (Social amoeba).